A 398-amino-acid chain; its full sequence is Phosphoglycerate kinase (398 aa).

Substrate is bound by residues 22-24, arginine 38, 61-64, arginine 120, and arginine 153; these read DFN and HLGR. ATP-binding positions include lysine 204, glutamate 326, and 352 to 355; that span reads GGDT.

The protein belongs to the phosphoglycerate kinase family. Monomer.

The protein localises to the cytoplasm. It carries out the reaction (2R)-3-phosphoglycerate + ATP = (2R)-3-phospho-glyceroyl phosphate + ADP. The protein operates within carbohydrate degradation; glycolysis; pyruvate from D-glyceraldehyde 3-phosphate: step 2/5. This is Phosphoglycerate kinase from Geobacter metallireducens (strain ATCC 53774 / DSM 7210 / GS-15).